Reading from the N-terminus, the 369-residue chain is Peptide chain release factor 2 (369 aa).

Glutamine 251 bears the N5-methylglutamine mark.

It belongs to the prokaryotic/mitochondrial release factor family. Methylated by PrmC. Methylation increases the termination efficiency of RF2.

It localises to the cytoplasm. Its function is as follows. Peptide chain release factor 2 directs the termination of translation in response to the peptide chain termination codons UGA and UAA. The chain is Peptide chain release factor 2 from Acidothermus cellulolyticus (strain ATCC 43068 / DSM 8971 / 11B).